A 1423-amino-acid polypeptide reads, in one-letter code: uncharacterized protein (1423 aa).

Positions 1 to 28 (MTSSVRLAFLATLLLLLPLEAQIQQANS) are cleaved as a signal peptide. Over 29–1321 (ANVNQNVGQQ…RSREKQNFLT (1293 aa)) the chain is Extracellular. N-linked (GlcNAc...) asparagine glycosylation is found at Asn94, Asn306, Asn355, Asn483, Asn666, and Asn903. In terms of domain architecture, NIDO spans 184-347 (SFFGQSASKA…GRYMFRVDDV (164 aa)). Residues 638–818 (VKKKSLEMCH…FRCQMFYWRR (181 aa)) enclose the AMOP domain. A helical transmembrane segment spans residues 1322–1342 (WLAIIGGIFGVLVFVILIFLC). Residues 1343 to 1423 (CWIVKQKKKG…EDLHGLKTSV (81 aa)) are Cytoplasmic-facing. The segment at 1364–1401 (SRSSMTGSRGGKKYPIHESEPLNEKRFDADTYRDDDFY) is disordered. Positions 1378–1401 (PIHESEPLNEKRFDADTYRDDDFY) are enriched in basic and acidic residues.

The protein resides in the membrane. This is an uncharacterized protein from Caenorhabditis elegans.